Consider the following 316-residue polypeptide: Transaldolase 1 (316 aa).

The active-site Schiff-base intermediate with substrate is the lysine 131.

Belongs to the transaldolase family. Type 1 subfamily. In terms of assembly, homodimer.

The protein resides in the cytoplasm. The catalysed reaction is D-sedoheptulose 7-phosphate + D-glyceraldehyde 3-phosphate = D-erythrose 4-phosphate + beta-D-fructose 6-phosphate. It functions in the pathway carbohydrate degradation; pentose phosphate pathway; D-glyceraldehyde 3-phosphate and beta-D-fructose 6-phosphate from D-ribose 5-phosphate and D-xylulose 5-phosphate (non-oxidative stage): step 2/3. Transaldolase is important for the balance of metabolites in the pentose-phosphate pathway. This chain is Transaldolase 1, found in Pectobacterium atrosepticum (strain SCRI 1043 / ATCC BAA-672) (Erwinia carotovora subsp. atroseptica).